The chain runs to 136 residues: Transcription antitermination protein NusB (136 aa).

It belongs to the NusB family.

Involved in transcription antitermination. Required for transcription of ribosomal RNA (rRNA) genes. Binds specifically to the boxA antiterminator sequence of the ribosomal RNA (rrn) operons. This chain is Transcription antitermination protein NusB, found in Salinispora tropica (strain ATCC BAA-916 / DSM 44818 / JCM 13857 / NBRC 105044 / CNB-440).